A 337-amino-acid polypeptide reads, in one-letter code: MKTLGEFIVEKQLDFSHATGELTALLSAIKLGAKIIHRDINKAGLVDILGASGVSNIQGEDQMKLDLFANEKLKAALKARGEVAGIASEEEDDIVIFDGGRAENAKYVVLMDPLDGSSNIDVNVSVGTIFSIYRRITPFGTPITEEDFLQPGTKQVTAGYVVYGSSTMLVYTTGYGVHAFTYDPSLGVFCLSHEKVRYPATGCMYSINEGNYIKFPLGVKKYIKYCQEQDEATKRPYTSRYIGSLVADFHRNLLKGGIYIYPSTASHPQGKLRLLYECNPMAFLAEQAGGKATDGVNRILDIVPEKLHQRAPFFVGTKSMVEDAEGFIAKFPDEEAK.

4 residues coordinate Mg(2+): E89, D112, L114, and D115. Substrate is bound by residues 115–118, N208, Y241, and K271; that span reads DGSS. Residue E277 participates in Mg(2+) binding.

Belongs to the FBPase class 1 family. In terms of assembly, homotetramer. Mg(2+) serves as cofactor.

The protein localises to the cytoplasm. It carries out the reaction beta-D-fructose 1,6-bisphosphate + H2O = beta-D-fructose 6-phosphate + phosphate. It participates in carbohydrate biosynthesis; gluconeogenesis. This chain is Fructose-1,6-bisphosphatase class 1, found in Yersinia pestis bv. Antiqua (strain Antiqua).